The chain runs to 102 residues: NADH-quinone oxidoreductase subunit K (102 aa).

The next 3 helical transmembrane spans lie at 5-25 (ITHY…GIFL), 31-51 (IIIL…FVAF), and 66-86 (FVLT…VVFF).

Belongs to the complex I subunit 4L family. As to quaternary structure, NDH-1 is composed of 14 different subunits. Subunits NuoA, H, J, K, L, M, N constitute the membrane sector of the complex.

Its subcellular location is the cell inner membrane. It catalyses the reaction a quinone + NADH + 5 H(+)(in) = a quinol + NAD(+) + 4 H(+)(out). Functionally, NDH-1 shuttles electrons from NADH, via FMN and iron-sulfur (Fe-S) centers, to quinones in the respiratory chain. The immediate electron acceptor for the enzyme in this species is believed to be ubiquinone. Couples the redox reaction to proton translocation (for every two electrons transferred, four hydrogen ions are translocated across the cytoplasmic membrane), and thus conserves the redox energy in a proton gradient. The chain is NADH-quinone oxidoreductase subunit K from Bartonella grahamii (strain as4aup).